Consider the following 171-residue polypeptide: MTKQHAYTREDLLRCARGELFGPGNAQLPAPNMLMVDRITHISDVGGKYGKGEMVAELDINPDLWFFACHFEGDPVMPGCLGLDAMWQLVGFYLGWQGNPGRGRALGSGEVKFFGQVLPTAKKLTYNIHIKRTISRSLILGIADGTVSVDGREIYSAEGLRVGLFTSTDSF.

Histidine 70 is an active-site residue.

The protein belongs to the thioester dehydratase family. FabA subfamily. As to quaternary structure, homodimer.

The protein localises to the cytoplasm. The enzyme catalyses a (3R)-hydroxyacyl-[ACP] = a (2E)-enoyl-[ACP] + H2O. The catalysed reaction is (3R)-hydroxydecanoyl-[ACP] = (2E)-decenoyl-[ACP] + H2O. It carries out the reaction (2E)-decenoyl-[ACP] = (3Z)-decenoyl-[ACP]. It functions in the pathway lipid metabolism; fatty acid biosynthesis. Functionally, necessary for the introduction of cis unsaturation into fatty acids. Catalyzes the dehydration of (3R)-3-hydroxydecanoyl-ACP to E-(2)-decenoyl-ACP and then its isomerization to Z-(3)-decenoyl-ACP. Can catalyze the dehydratase reaction for beta-hydroxyacyl-ACPs with saturated chain lengths up to 16:0, being most active on intermediate chain length. This is 3-hydroxydecanoyl-[acyl-carrier-protein] dehydratase from Azotobacter vinelandii (strain DJ / ATCC BAA-1303).